Consider the following 658-residue polypeptide: MKDKFELVSKYSPQGDQPRAIEQLVAGLKKGLKHQTLLGATGTGKTFTVSNVIQEVNKPTLVMAHNKTLAGQLYSEFKEFFPNNAVEYFVSYYDYYQPEAYVPQSDTYIEKDASINDEIDKLRHSATAALFERRDVIIIASVSCIYGLGSPIEYGEMLVSLRVGMEISRDQLLRKLVDIQYDRNDIDFQRGRFRVRGDVVEIFPASRDEHCMRIEFFGDEIERIREVDALTGEIIGEREHVSIFPASHFVTRPDIMKKAIVNIKAELEDRLQVLRADNKLLEAQRLEQRTNYDLEMMEEMGYCSGIENYSRHLSLRPAGVTPYTLLDYFPDDFQMVIDESHVTMPQIRGMFNGDQARKQMLVDHGFRLPSALDNRPLRLEEFEKHINQIMFISATPGPYELEKNPDVIEQIIRPTGLLDPIVEIRPIQGQIDDLMDEINNRVEKNERVLITTLTKKMSEDLTNYLKEAGVKVQYLHSEVKTLERIEIIRDLRLGVYDVIVGINLLREGIDLPEVSLVAILDADKEGFLRSERSLIQTMGRAARNENGRVIMYADKMTDSMRNSIGETERRRKIQIEYNEKHGITPKTIKKEIRGIIAATSAADEREAVKQHDLSKMSKKERDVFIEGMEHEMKEAAKALDFERAAELRDALLEIKAEG.

One can recognise a Helicase ATP-binding domain in the interval A26 to P414. G39 to T46 lines the ATP pocket. A Beta-hairpin motif is present at residues Y92–I115. A Helicase C-terminal domain is found at Q430 to I592. Positions D622 to G658 constitute a UVR domain.

The protein belongs to the UvrB family. As to quaternary structure, forms a heterotetramer with UvrA during the search for lesions. Interacts with UvrC in an incision complex.

Its subcellular location is the cytoplasm. Its function is as follows. The UvrABC repair system catalyzes the recognition and processing of DNA lesions. A damage recognition complex composed of 2 UvrA and 2 UvrB subunits scans DNA for abnormalities. Upon binding of the UvrA(2)B(2) complex to a putative damaged site, the DNA wraps around one UvrB monomer. DNA wrap is dependent on ATP binding by UvrB and probably causes local melting of the DNA helix, facilitating insertion of UvrB beta-hairpin between the DNA strands. Then UvrB probes one DNA strand for the presence of a lesion. If a lesion is found the UvrA subunits dissociate and the UvrB-DNA preincision complex is formed. This complex is subsequently bound by UvrC and the second UvrB is released. If no lesion is found, the DNA wraps around the other UvrB subunit that will check the other stand for damage. The chain is UvrABC system protein B from Listeria monocytogenes serotype 4b (strain F2365).